Here is a 315-residue protein sequence, read N- to C-terminus: Olfactory receptor 5P59 (315 aa).

Residues 1–28 lie on the Extracellular side of the membrane; sequence MAFLQDGNHTAVTEFILLGLTDDPVLRV. Asn-8 is a glycosylation site (N-linked (GlcNAc...) asparagine). The helical transmembrane segment at 29–49 threads the bilayer; the sequence is VLFTIILCIYLVTVFGNLSTI. Over 50-57 the chain is Cytoplasmic; that stretch reads LLIRVSSQ. Residues 58–78 traverse the membrane as a helical segment; the sequence is LHHPMYFFLSHLASVDIGISS. Over 79–102 the chain is Extracellular; the sequence is SVTPSMLVNFLLERSTISYLGCGI. Cys-100 and Cys-193 are oxidised to a cystine. The helical transmembrane segment at 103–123 threads the bilayer; it reads QLGSADFIASVECFLLAAMAY. The Cytoplasmic portion of the chain corresponds to 124 to 136; that stretch reads DRFMAVCNPLLYS. Residues 137-157 traverse the membrane as a helical segment; it reads TKMSTQVCVQLVVGSYIGGFL. At 158–200 the chain is on the extracellular side; the sequence is NASLIVTVYFFSFLFCGPNRIDHFFCDFAPLAELSCSDVSVSV. The helical transmembrane segment at 201–221 threads the bilayer; the sequence is LIISFSAGSVTMITVFVIVIS. The Cytoplasmic portion of the chain corresponds to 222–241; it reads YSYILITILKMHSTEGRHKA. A helical membrane pass occupies residues 242 to 262; that stretch reads FSTCTSHLTAVTLYYGTITFI. The Extracellular portion of the chain corresponds to 263–275; it reads YVMPKSSFSTDQN. A helical transmembrane segment spans residues 276–296; the sequence is KVVSVFYMVMIPMLNPLIYSL. At 297–315 the chain is on the cytoplasmic side; the sequence is SNNEIKGALKRQLGMKTLS.

Belongs to the G-protein coupled receptor 1 family.

The protein resides in the cell membrane. Functionally, potential odorant receptor. The sequence is that of Olfactory receptor 5P59 from Mus musculus (Mouse).